The sequence spans 551 residues: Histone-lysine N-methyltransferase SETDB2 (551 aa).

Residues 146-210 form the MBD domain; the sequence is LLGHNPLRAP…DRFSFSTQVC (65 aa). In terms of domain architecture, Pre-SET spans 269-329; sequence VCCDCTDGCT…RCENRVVQKG (61 aa). Zn(2+)-binding residues include Cys271, Cys273, Cys277, Cys283, Cys285, Cys310, Cys314, Cys316, and Cys321. An SET domain is found at 332 to 537; sequence VRLQVFRTPE…AGTELTWSCT (206 aa). Residue 342-344 participates in S-adenosyl-L-methionine binding; sequence HMW. The interval 426 to 447 is disordered; it reads SLAQRRDQQQFSISSETEDNRC. Residues Arg491 and 494–495 each bind S-adenosyl-L-methionine; that span reads TH.

Belongs to the class V-like SAM-binding methyltransferase superfamily.

It is found in the nucleus. Its subcellular location is the chromosome. The catalysed reaction is N(6),N(6)-dimethyl-L-lysyl(9)-[histone H3] + S-adenosyl-L-methionine = N(6),N(6),N(6)-trimethyl-L-lysyl(9)-[histone H3] + S-adenosyl-L-homocysteine + H(+). In terms of biological role, histone methyltransferase involved in left-right axis specification in early development and mitosis. Specifically trimethylates 'Lys-9' of histone H3 (H3K9me3). H3K9me3 represents a specific tag for epigenetic transcriptional repression by recruiting HP1 (CBX1, CBX3 and/or CBX5) proteins to methylated histones. Contributes to H3K9me3 in both the interspersed repetitive elements and centromere-associated repeats. Plays a role in chromosome condensation and segregation during mitosis. During early development, required to specify the left-right axis by repressing expression of FGF8, leading to negatively regulate the dorsal organizer formation. This chain is Histone-lysine N-methyltransferase SETDB2 (setdb2), found in Danio rerio (Zebrafish).